A 291-amino-acid chain; its full sequence is Diaminopimelate epimerase (291 aa).

Substrate is bound by residues Asn-13, Gln-46, and Asn-66. The Proton donor role is filled by Cys-75. Substrate is bound by residues 76-77, Asn-170, Asn-203, and 221-222; these read GN and ER. Cys-230 acts as the Proton acceptor in catalysis. Residue 231-232 participates in substrate binding; that stretch reads GS.

The protein belongs to the diaminopimelate epimerase family. Homodimer.

Its subcellular location is the cytoplasm. It carries out the reaction (2S,6S)-2,6-diaminopimelate = meso-2,6-diaminopimelate. The protein operates within amino-acid biosynthesis; L-lysine biosynthesis via DAP pathway; DL-2,6-diaminopimelate from LL-2,6-diaminopimelate: step 1/1. Functionally, catalyzes the stereoinversion of LL-2,6-diaminopimelate (L,L-DAP) to meso-diaminopimelate (meso-DAP), a precursor of L-lysine and an essential component of the bacterial peptidoglycan. The polypeptide is Diaminopimelate epimerase (Albidiferax ferrireducens (strain ATCC BAA-621 / DSM 15236 / T118) (Rhodoferax ferrireducens)).